The sequence spans 144 residues: UPF0299 membrane protein MS1271 (144 aa).

4 helical membrane passes run 5–25 (IFLF…GEGI), 28–48 (LIPI…IGLT), 57–77 (VFFG…PVSV), and 92–112 (SLLI…GFLG).

This sequence belongs to the UPF0299 family.

It localises to the cell inner membrane. The protein is UPF0299 membrane protein MS1271 of Mannheimia succiniciproducens (strain KCTC 0769BP / MBEL55E).